We begin with the raw amino-acid sequence, 470 residues long: AAA-ATPase At5g17730 (470 aa).

The first 18 residues, 1–18 (MFSLRNLPSLAPFVSAYA), serve as a signal peptide directing secretion. Residue 252-259 (GPPGTGKT) coordinates ATP.

This sequence belongs to the AAA ATPase family. BCS1 subfamily. The cofactor is Mg(2+).

It catalyses the reaction ATP + H2O = ADP + phosphate + H(+). This is AAA-ATPase At5g17730 from Arabidopsis thaliana (Mouse-ear cress).